Reading from the N-terminus, the 497-residue chain is uncharacterized protein (497 aa).

266–273 contacts ATP; the sequence is GIQGTGKS.

Belongs to the AAA ATPase family. Highly divergent.

Its subcellular location is the plastid. The protein resides in the chloroplast. This is an uncharacterized protein from Trieres chinensis (Marine centric diatom).